The sequence spans 65 residues: Large ribosomal subunit protein uL30 (65 aa).

This sequence belongs to the universal ribosomal protein uL30 family. Part of the 50S ribosomal subunit.

This Brucella suis (strain ATCC 23445 / NCTC 10510) protein is Large ribosomal subunit protein uL30.